We begin with the raw amino-acid sequence, 273 residues long: MTDRYAVIGNPISHSQSPFIHEEFARATGQDISYERLFADIGRFNDVVGEFVASGGKGLNITLPFKGDAFRYASELTERARAAEAVNTLTFRDGKVYGDNTDGVGLVRDIVENLDYPIVGRRVLILGAGGAVRGVLEPILEQKPASLTIANRTVIKAEALAHHFARYGKVEAVGYAALEGRSFDIVINATSTSLNNEMPPLPHGVFTPRTLAYDMVYSTGLTPFLQRAQGENAGMLADGLGMLVEQAAESFSIWRGAQPETRKVTNMLREVLA.

Residues 15-17 and Thr62 contribute to the shikimate site; that span reads SQS. The active-site Proton acceptor is Lys66. Glu78 serves as a coordination point for NADP(+). Residues Asn87 and Asp102 each coordinate shikimate. NADP(+)-binding positions include 127 to 131, 151 to 156, and Met215; these read GAGGA and NRTVIK. Position 217 (Tyr217) interacts with shikimate. Gly239 provides a ligand contact to NADP(+).

The protein belongs to the shikimate dehydrogenase family. In terms of assembly, homodimer.

The catalysed reaction is shikimate + NADP(+) = 3-dehydroshikimate + NADPH + H(+). The protein operates within metabolic intermediate biosynthesis; chorismate biosynthesis; chorismate from D-erythrose 4-phosphate and phosphoenolpyruvate: step 4/7. Involved in the biosynthesis of the chorismate, which leads to the biosynthesis of aromatic amino acids. Catalyzes the reversible NADPH linked reduction of 3-dehydroshikimate (DHSA) to yield shikimate (SA). This Chromobacterium violaceum (strain ATCC 12472 / DSM 30191 / JCM 1249 / CCUG 213 / NBRC 12614 / NCIMB 9131 / NCTC 9757 / MK) protein is Shikimate dehydrogenase (NADP(+)).